An 848-amino-acid chain; its full sequence is Trimethylamine-N-oxide reductase 1 (848 aa).

The segment at residues M1 to A39 is a signal peptide (tat-type signal). Position 191 (S191) interacts with Mo-bis(molybdopterin guanine dinucleotide).

Belongs to the prokaryotic molybdopterin-containing oxidoreductase family. Interacts with the N-terminal domain of TorC. Mo-bis(molybdopterin guanine dinucleotide) is required as a cofactor. Exported by the Tat system. The position of the signal peptide cleavage has been experimentally proven.

The protein resides in the periplasm. It catalyses the reaction trimethylamine + 2 Fe(III)-[cytochrome c] + H2O = trimethylamine N-oxide + 2 Fe(II)-[cytochrome c] + 3 H(+). Its function is as follows. Reduces trimethylamine-N-oxide (TMAO) into trimethylamine; an anaerobic reaction coupled to energy-yielding reactions. The sequence is that of Trimethylamine-N-oxide reductase 1 (torA) from Escherichia coli (strain K12).